The sequence spans 197 residues: MFITFEGIDGSGKSTQIQLLAQYLEKRGKKVILKREPGGTETGEKIRKILLEEEVTPKAELFLFLASRNLLVTEIKQYLSEGYAVLLDRYTDSSVAYQGFGRNLGKEIVEELNDLATDGLIPDLTFYIDVDVETALKRKGELNRFEKREFLEHVREGYLVLAREHPERIVVLDGKRSIEEIHRDVVREVERRWKLDV.

ATP is bound at residue 7-14; the sequence is GIDGSGKS.

The protein belongs to the thymidylate kinase family.

It carries out the reaction dTMP + ATP = dTDP + ADP. Phosphorylation of dTMP to form dTDP in both de novo and salvage pathways of dTTP synthesis. This Thermotoga sp. (strain RQ2) protein is Thymidylate kinase.